Reading from the N-terminus, the 300-residue chain is Porphobilinogen deaminase (300 aa).

Cys239 is subject to S-(dipyrrolylmethanemethyl)cysteine.

This sequence belongs to the HMBS family. Monomer. It depends on dipyrromethane as a cofactor.

The enzyme catalyses 4 porphobilinogen + H2O = hydroxymethylbilane + 4 NH4(+). It functions in the pathway porphyrin-containing compound metabolism; protoporphyrin-IX biosynthesis; coproporphyrinogen-III from 5-aminolevulinate: step 2/4. Tetrapolymerization of the monopyrrole PBG into the hydroxymethylbilane pre-uroporphyrinogen in several discrete steps. The protein is Porphobilinogen deaminase of Francisella tularensis subsp. tularensis (strain FSC 198).